A 200-amino-acid polypeptide reads, in one-letter code: Ribonuclease HII (200 aa).

The 187-residue stretch at 14 to 200 folds into the RNase H type-2 domain; it reads ERVAGLDEAG…HRQSFTLFRD (187 aa). A divalent metal cation-binding residues include aspartate 20, glutamate 21, and aspartate 112.

Belongs to the RNase HII family. Mn(2+) serves as cofactor. It depends on Mg(2+) as a cofactor.

The protein localises to the cytoplasm. The enzyme catalyses Endonucleolytic cleavage to 5'-phosphomonoester.. Endonuclease that specifically degrades the RNA of RNA-DNA hybrids. The polypeptide is Ribonuclease HII (Salinibacter ruber (strain DSM 13855 / M31)).